The chain runs to 49 residues: Large ribosomal subunit protein eL40 (49 aa).

This sequence belongs to the eukaryotic ribosomal protein eL40 family.

The protein is Large ribosomal subunit protein eL40 of Natronomonas pharaonis (strain ATCC 35678 / DSM 2160 / CIP 103997 / JCM 8858 / NBRC 14720 / NCIMB 2260 / Gabara) (Halobacterium pharaonis).